Reading from the N-terminus, the 488-residue chain is DNA polymerase processivity factor (488 aa).

Disordered stretches follow at residues 1-26, 331-453, and 469-488; these read MTDSPGGVAPASPVEDASDASLGQPE, SPSA…RSGS, and PGAFSAFRGGPQTPYGFGFP. Residues 331 to 344 show a composition bias toward low complexity; that stretch reads SPSAGSSASRASGS. Polar residues predominate over residues 345-355; the sequence is EPTDSQDSASD. Positions 368–379 are enriched in low complexity; that stretch reads AARAGEAGALHA. A compositionally biased stretch (polar residues) spans 383 to 393; it reads PSSTTRVTPTT. The short motif at 394 to 413 is the Bipartite nuclear localization signal element; the sequence is KRGRSGGEDARADTALKKPK. Residues 398 to 409 show a composition bias toward basic and acidic residues; sequence SGGEDARADTAL. A compositionally biased stretch (low complexity) spans 437–453; sequence ADGTAARPAAPDARSGS.

It belongs to the herpesviridae DNA polymerase processivity factor family. Interacts with the DNA polymerase catalytic subunit UL30. Interacts with the origin-binding protein.

It localises to the host nucleus. Functionally, plays an essential role in viral DNA replication by acting as the polymerase accessory subunit. Associates with the viral polymerase to increase its processivity and forms high-affinity direct interactions with DNA. Facilitates the origin-binding protein UL9 loading onto DNA thus increasing its ability to assemble into a functional complex capable of unwinding duplex DNA. The protein is DNA polymerase processivity factor of Homo sapiens (Human).